The following is a 436-amino-acid chain: MFDSTLNPLWQRYILAVQEEVKPALGCTEPISLALAAAVAAAELEGPVERVEAWVSPNLMKNGLGVTVPGTGMVGLPIAAALGALGGNANAGLEVLKDATAQAIADAKALLAAGKVSVKIQEPCDEILFSRAKVWNGEKWACVTIVGGHTNIVHIETHNGVVFTQQACVTEGEQESPLTVLSRTTLAEILKFVNEVPFAAIRFILDSAKLNCALSQEGLSGNWGLHIGATLEKQCARGLLAKDLSSSIVIRTSAASDARMGGATLPAMSNSGSGNQGITATMPVVVVAEHFGADDERLARALMLSHLSAIYIHNQLPRLSALCAATTAAMGAAAGMAWLVDGRYETISMAISSMIGDVSGMICDGASNSCAMKVSTSASAAWKAVLMALDDTAVTGNEGIVAHDVEQSIANLCALASHSMQQTDRQIIEIMASKAR.

The protein belongs to the UPF0597 family.

This Escherichia coli O6:H1 (strain CFT073 / ATCC 700928 / UPEC) protein is UPF0597 protein YhaM.